The primary structure comprises 1088 residues: RNA-directed RNA polymerase (1088 aa).

The 187-residue stretch at 501–687 folds into the RdRp catalytic domain; that stretch reads LSYGDVTRFL…AKRYIAGGKI (187 aa).

It belongs to the reoviridae RNA-directed RNA polymerase family. In terms of assembly, interacts with VP3 (Potential). Interacts with VP2; this interaction activates VP1. Interacts with NSP5; this interaction is probably necessary for the formation of functional virus factories. Interacts with NSP2; this interaction is weak. The cofactor is Mg(2+).

It is found in the virion. It carries out the reaction RNA(n) + a ribonucleoside 5'-triphosphate = RNA(n+1) + diphosphate. RNA-directed RNA polymerase that is involved in both transcription and genome replication. Together with VP3 capping enzyme, forms an enzyme complex positioned near the channels situated at each of the five-fold vertices of the core. Following infection, the outermost layer of the virus is lost, leaving a double-layered particle (DLP) made up of the core and VP6 shell. VP1 then catalyzes the transcription of fully conservative plus-strand genomic RNAs that are extruded through the DLP's channels into the cytoplasm where they function as mRNAs for translation of viral proteins. One copy of each of the viral (+)RNAs is also recruited during core assembly, together with newly synthesized polymerase complexes and VP2. The polymerase of these novo-formed particles catalyzes the synthesis of complementary minus-strands leading to dsRNA formation. To do so, the polymerase specifically recognizes and binds 4 bases 5'-UGUG-3' in the conserved 3'-sequence of plus-strand RNA templates. VP2 presumably activates the autoinhibited VP1-RNA complex to coordinate packaging and genome replication. Once dsRNA synthesis is complete, the polymerase switches to the transcriptional mode, thus providing secondary transcription. This chain is RNA-directed RNA polymerase, found in Homo sapiens (Human).